The chain runs to 204 residues: MKKYRDHYFLKAKQENYPARSVYKLKEIDNRFKIFRQGMKVLDLGAAPGSWSLGAAEKVGPRGRVLACDLQETDTVFPDNVTFMQENVFERSEAFENLLDEIAPFDVVISDMAPRTTGTRFTDQARSLELCLEALAVADRCLIKGGSFVVKIFMGPDVQELVQAMRQRFSAVKSFKPKSSRAESKETFYVCLGYRGVETSDTDK.

S-adenosyl-L-methionine is bound by residues glycine 49, tryptophan 51, aspartate 69, asparagine 87, and aspartate 111. Lysine 151 serves as the catalytic Proton acceptor.

It belongs to the class I-like SAM-binding methyltransferase superfamily. RNA methyltransferase RlmE family.

The protein localises to the cytoplasm. The catalysed reaction is uridine(2552) in 23S rRNA + S-adenosyl-L-methionine = 2'-O-methyluridine(2552) in 23S rRNA + S-adenosyl-L-homocysteine + H(+). Its function is as follows. Specifically methylates the uridine in position 2552 of 23S rRNA at the 2'-O position of the ribose in the fully assembled 50S ribosomal subunit. This is Ribosomal RNA large subunit methyltransferase E from Nitratidesulfovibrio vulgaris (strain ATCC 29579 / DSM 644 / CCUG 34227 / NCIMB 8303 / VKM B-1760 / Hildenborough) (Desulfovibrio vulgaris).